A 375-amino-acid polypeptide reads, in one-letter code: MSSHKGSVVAQGNGAPASNREADTVELAELGPLLEEKGKRVIANPPKAEEEQTCPVPQEEEEEVRVLTLPLQAHHAMEKMEEFVYKVWEGRWRVIPYDVLPDWLKDNDYLLHGHRPPMPSFRACFKSIFRIHTETGNIWTHLLGFVLFLFLGILTMLRPNMYFMAPLQEKVVFGMFFLGAVLCLSFSWLFHTVYCHSEKVSRTFSKLDYSGIALLIMGSFVPWLYYSFYCSPQPRLIYLSIVCVLGISAIIVAQWDRFATPKHRQTRAGVFLGLGLSGVVPTMHFTIAEGFVKATTVGQMGWFFLMAVMYITGAGLYAARIPERFFPGKFDIWFQSHQIFHVLVVAAAFVHFYGVSNLQEFRYGLEGGCTDDTLL.

The tract at residues methionine 1 to glutamate 60 is disordered. Topologically, residues methionine 1–glycine 136 are cytoplasmic. A helical membrane pass occupies residues asparagine 137 to leucine 157. The Extracellular portion of the chain corresponds to arginine 158–lysine 170. A helical membrane pass occupies residues valine 171–histidine 191. Histidine 191 contacts Zn(2+). Over threonine 192–threonine 203 the chain is Cytoplasmic. Residues phenylalanine 204 to leucine 224 traverse the membrane as a helical segment. Topologically, residues tyrosine 225–proline 234 are extracellular. The chain crosses the membrane as a helical span at residues arginine 235–tryptophan 255. The Cytoplasmic segment spans residues aspartate 256 to arginine 264. The chain crosses the membrane as a helical span at residues glutamine 265–phenylalanine 285. Residues threonine 286–glycine 298 are Extracellular-facing. A helical membrane pass occupies residues glutamine 299 to alanine 319. The Cytoplasmic portion of the chain corresponds to arginine 320–histidine 337. Zn(2+)-binding residues include histidine 337 and histidine 341. A helical membrane pass occupies residues glutamine 338–leucine 358. Residues glutamine 359–leucine 375 lie on the Extracellular side of the membrane.

This sequence belongs to the ADIPOR family. As to quaternary structure, may form homooligomers and heterooligomers with ADIPOR2. Interacts with APPL2 (via BAR domain); hinders the accessibility of APPL1 to ADIPOR1; negatively regulates adiponectin signaling; ADIPOQ dissociates this interaction and facilitates the recruitment of APPL1 to ADIPOR1. Interacts with APPL1; ADIPOQ enhances this interaction; inhibites adiponectin-stimulated binding of APPL2 to ADIPOR1. Widely expressed. Highly expressed in heart and skeletal muscle. Expressed at intermediate level in brain, spleen, kidney, liver, placenta, lung and peripheral blood leukocytes. Weakly expressed in colon, thymus and small intestine.

It localises to the cell membrane. Functionally, receptor for ADIPOQ, an essential hormone secreted by adipocytes that regulates glucose and lipid metabolism. Required for normal glucose and fat homeostasis and for maintaining a normal body weight. ADIPOQ-binding activates a signaling cascade that leads to increased AMPK activity, and ultimately to increased fatty acid oxidation, increased glucose uptake and decreased gluconeogenesis. Has high affinity for globular adiponectin and low affinity for full-length adiponectin. In Homo sapiens (Human), this protein is Adiponectin receptor protein 1.